Consider the following 786-residue polypeptide: MGLQPLEFSDCYLDSPWFRERIRAHEAELERTNKFIKELIKDGKNLISATKSLSAAQRKFAHSLRDFKFEFIGDAETDDERCIDASLREFSNFLKNLEEQREIMALSVTETLIKPLEKFRKEQLGAVKEEKKKFDKETEKNYSLIDKHLTLSARKKDSHLQEADLQVEQNRQHFYELSLEYVCKLQEIQERKKFEFVEPMLSFFQGMFTFYHQGHELSKDFNHYKMELQINIQNTRNRFEGTRSEVEELMNKIRQNPKDQKRASQFTAEGYLYVQEKRPAPFGSSWVKHYCMYRKTAKKFNMIPFEHRSGGKLGDGEAFFLKECTKRHMDSTDRRFCFDIEAADRPGVPLTVQAFSEEERKQWLEALGGKEALFHTFNRAIVPRPEGGAQLDKMGFTILRKCISAVETRGINDQGLYRVVGVSSKVQRLLSMLMDVKMCNELDLENSADWEVKTVTSALKQYLRSLPEPLMTYELHRDFIVPAKSGSPESRVNAIHFLVHKLPEKNKEMLDILVKHLTNVSSHSKQNLMTVANLGVVFGPTLMRPQEETVAAIMDLKFQNIVVEILIENHEKIFRTSPDTTFAEPTCLSASPPNAPPRQSKRQGQRTKRPVAVYNLCLELEEGDSPSPLKEDPPSSSQDSLSTPSPTTSAAHGPPGLDGNHLAADGGSCGDATATTPSQTRPSMVQWLNMQSPTTPSSNPAGTPPSPRMSPFPLSPAASIVDKLPECVINRKARAVYPCEAEHSSELSFEIGAIFEDVQTSREPGWLEGTLNGKRGLIPQNYVKLL.

The region spanning 7–262 is the BAR domain; that stretch reads EFSDCYLDSP…IRQNPKDQKR (256 aa). In terms of domain architecture, PH spans 265–372; the sequence is QFTAEGYLYV…WLEALGGKEA (108 aa). The region spanning 389–574 is the Rho-GAP domain; that stretch reads AQLDKMGFTI…ILIENHEKIF (186 aa). 2 disordered regions span residues 584 to 609 and 622 to 714; these read EPTC…RTKR and EGDS…PFPL. The span at 599 to 609 shows a compositional bias: basic residues; it reads QSKRQGQRTKR. Low complexity predominate over residues 634–649; it reads PSSSQDSLSTPSPTTS. The segment covering 673 to 701 has biased composition (polar residues); it reads TATTPSQTRPSMVQWLNMQSPTTPSSNPA. The segment covering 702–714 has biased composition (pro residues); sequence GTPPSPRMSPFPL. The 59-residue stretch at 728–786 folds into the SH3 domain; it reads VINRKARAVYPCEAEHSSELSFEIGAIFEDVQTSREPGWLEGTLNGKRGLIPQNYVKLL.

In terms of assembly, interacts with PKN3. Interacts with caspase-activated PAK2 proteolytic fragment PAK-2p34; the interaction does not affect ARHGAP10 GTPase activation activity towards RHOA and CDC42. Interacts via its SH3 domain with PTK2/FAK1. Interacts with PTK2B/PYK2; the interaction negatively regulates ARHGAP10 GTPase-activating activity. Interacts with MICAL1 and WDR44; complex formation might transit from GRAF2/ARHGAP10-MICAL1 to GRAF2/ARHGAP10-WDR44 complexes. Post-translationally, phosphorylated on tyrosine residues, probably involving PTK2B/PYK2. As to expression, high levels of expression in brain, testes, liver, heart and kidney.

It localises to the cytoplasm. Its subcellular location is the perinuclear region. The protein resides in the cell membrane. It is found in the endosome membrane. Its function is as follows. GTPase-activating protein that catalyzes the conversion of active GTP-bound Rho GTPases to their inactive GDP-bound form, thus suppressing various Rho GTPase-mediated cellular processes. Also converts Cdc42 to an inactive GDP-bound state. Essential for PTKB2 regulation of cytoskeletal organization via Rho family GTPases. Inhibits PAK2 proteolytic fragment PAK-2p34 kinase activity and changes its localization from the nucleus to the perinuclear region. Stabilizes PAK-2p34 thereby increasing stimulation of cell death. Associates with MICAL1 on the endosomal membrane to promote Rab8-Rab10-dependent tubule extension. After dissociation with MICAL1, recruits WDR44 which connects the endoplasmic reticulum (ER) with the endosomal tubule, thereby participating in the export of a subset of neosynthesized proteins. The chain is Rho GTPase-activating protein 10 (Arhgap10) from Mus musculus (Mouse).